Here is a 300-residue protein sequence, read N- to C-terminus: Quinolinate synthase (300 aa).

Iminosuccinate contacts are provided by His-21 and Ser-38. Cys-83 contacts [4Fe-4S] cluster. Residues 109–111 (YVN) and Ser-126 contribute to the iminosuccinate site. Cys-170 serves as a coordination point for [4Fe-4S] cluster. Iminosuccinate contacts are provided by residues 196-198 (HPE) and Thr-213. Cys-256 serves as a coordination point for [4Fe-4S] cluster.

The protein belongs to the quinolinate synthase family. Type 2 subfamily. Monomer. Homodimer. [4Fe-4S] cluster is required as a cofactor.

It localises to the cytoplasm. It carries out the reaction iminosuccinate + dihydroxyacetone phosphate = quinolinate + phosphate + 2 H2O + H(+). The protein operates within cofactor biosynthesis; NAD(+) biosynthesis; quinolinate from iminoaspartate: step 1/1. Its function is as follows. Catalyzes the condensation of iminoaspartate with dihydroxyacetone phosphate to form quinolinate. The polypeptide is Quinolinate synthase (Pyrococcus horikoshii (strain ATCC 700860 / DSM 12428 / JCM 9974 / NBRC 100139 / OT-3)).